The primary structure comprises 430 residues: Phosphoribosylamine--glycine ligase (430 aa).

The ATP-grasp domain occupies 109-316 (KDFMARHGIP…LLDLIEAALN (208 aa)). 135-196 (VRQQGAPIVI…EEYLDGEEAS (62 aa)) serves as a coordination point for ATP. Residues E286 and N288 each contribute to the Mg(2+) site.

It belongs to the GARS family. It depends on Mg(2+) as a cofactor. Requires Mn(2+) as cofactor.

The enzyme catalyses 5-phospho-beta-D-ribosylamine + glycine + ATP = N(1)-(5-phospho-beta-D-ribosyl)glycinamide + ADP + phosphate + H(+). It participates in purine metabolism; IMP biosynthesis via de novo pathway; N(1)-(5-phospho-D-ribosyl)glycinamide from 5-phospho-alpha-D-ribose 1-diphosphate: step 2/2. The polypeptide is Phosphoribosylamine--glycine ligase (Xylella fastidiosa (strain Temecula1 / ATCC 700964)).